Reading from the N-terminus, the 177-residue chain is Putative pre-16S rRNA nuclease (177 aa).

The protein belongs to the YqgF nuclease family.

It localises to the cytoplasm. Could be a nuclease involved in processing of the 5'-end of pre-16S rRNA. The polypeptide is Putative pre-16S rRNA nuclease (Psychrobacter arcticus (strain DSM 17307 / VKM B-2377 / 273-4)).